We begin with the raw amino-acid sequence, 733 residues long: MDENDLKYIEKVLGRKPNHIELAMFENLWSEHCAYRTSKKLLRMFAKTVNEKTSKNIVVGIGDDAAVIRLKNDICLAIAMESHNHPSYIDPYNGAATGVGGIVRDVLSMGAKPIALLDPLRFGDIFGKEGDKVRWLIEGVVKGIGDYGNRIGVPTVGGECEFDSSFDYNNLVNVVCVGLVKENEIITGKAKEPGLSLILIGSTGRDGIGGASFASKDLTEESEEERPSVQVGDAFSEKCLIDAVLEAVKTGKVKAMKDLGAAGLSGASSEMCYGGGVGCELYLENVVLREPLTPYEIMVSESQERMLLAVEPGSEEEIIEIFKKYELPASVIGKTIPEKRIIAKYKGEVVVDLPLDLLCEAPLYDREGKEDLKEKEDDKEKIKMPEDLNAVLLKLLESPNICSKEWIYQQYDHEVQIRTVVKPGKDAAVLRINEVYPMGIALTTDCNSRYCKLNPYVGAVNAVAEAVRNLATVGAEPIAMLDNLNFGNPERPERFWQLAECIKGLADAAEFFEIPVVGGNVSLYNETVIEGKEHPINPTPAIFVLGKVEDVEKVPGVLDNKIKEGDILIITNETKDEMGGSEYYKVIHNTEEGRVPRVDLEKEKKIYEEVREVVKEGLVSEAVDCSRGGLAVALAKMAVLNNIGLEVDLTEYNKNNLRDDILLFSETSGRIILAVRDENKDKVLSKLSSAYIIGKVGGSRLKIKINEKDVVNLDVEEMKKRYYEAFPKMMGEL.

His-32 is an active-site residue. Tyr-35 is a binding site for ATP. A Mg(2+)-binding site is contributed by Glu-81. Substrate-binding positions include 82 to 85 (SHNH) and Arg-104. Catalysis depends on His-83, which acts as the Proton acceptor. Residue Asp-105 participates in Mg(2+) binding. Residue Gln-230 participates in substrate binding. Mg(2+) is bound at residue Asp-258. 301 to 303 (ESQ) lines the substrate pocket. 2 residues coordinate ATP: Asp-482 and Gly-519. Asn-520 contributes to the Mg(2+) binding site. Residue Ser-522 coordinates substrate.

The protein belongs to the FGAMS family. Monomer. Part of the FGAM synthase complex composed of 1 PurL, 1 PurQ and 2 PurS subunits.

The protein localises to the cytoplasm. The catalysed reaction is N(2)-formyl-N(1)-(5-phospho-beta-D-ribosyl)glycinamide + L-glutamine + ATP + H2O = 2-formamido-N(1)-(5-O-phospho-beta-D-ribosyl)acetamidine + L-glutamate + ADP + phosphate + H(+). The protein operates within purine metabolism; IMP biosynthesis via de novo pathway; 5-amino-1-(5-phospho-D-ribosyl)imidazole from N(2)-formyl-N(1)-(5-phospho-D-ribosyl)glycinamide: step 1/2. In terms of biological role, part of the phosphoribosylformylglycinamidine synthase complex involved in the purines biosynthetic pathway. Catalyzes the ATP-dependent conversion of formylglycinamide ribonucleotide (FGAR) and glutamine to yield formylglycinamidine ribonucleotide (FGAM) and glutamate. The FGAM synthase complex is composed of three subunits. PurQ produces an ammonia molecule by converting glutamine to glutamate. PurL transfers the ammonia molecule to FGAR to form FGAM in an ATP-dependent manner. PurS interacts with PurQ and PurL and is thought to assist in the transfer of the ammonia molecule from PurQ to PurL. The sequence is that of Phosphoribosylformylglycinamidine synthase subunit PurL from Methanocaldococcus jannaschii (strain ATCC 43067 / DSM 2661 / JAL-1 / JCM 10045 / NBRC 100440) (Methanococcus jannaschii).